The chain runs to 967 residues: Vacuolar membrane protease (967 aa).

The Cytoplasmic portion of the chain corresponds to 1–16; it reads MARPSLSRSNPLGFTP. A helical transmembrane segment spans residues 17-37; that stretch reads WPVTVITAVVYLALVVPLLVV. Residues 38 to 387 lie on the Vacuolar side of the membrane; that stretch reads HHVVPSAPSS…SAFVVFELHT (350 aa). N-linked (GlcNAc...) asparagine glycosylation is found at Asn53 and Asn119. Zn(2+)-binding residues include His171 and Asp183. The Proton acceptor role is filled by Glu217. Residues Glu218, Glu243, and His316 each contribute to the Zn(2+) site. Residues 388 to 408 form a helical membrane-spanning segment; the sequence is LFALSVTLLVVAPLVLLVTSI. The Cytoplasmic segment spans residues 409–441; that stretch reads ALNRADKMYLFRASASPEDSDGSEAVLLHGVRG. Residues 442–462 traverse the membrane as a helical segment; that stretch reads FFRFPFLLVIPTAVTVGLAYL. Residues 463–472 lie on the Vacuolar side of the membrane; that stretch reads VTKFNPYIIH. A helical transmembrane segment spans residues 473-493; that stretch reads SSEYAVWSMMISAWVFLAWFV. At 494 to 507 the chain is on the cytoplasmic side; that stretch reads SRVADFARPSAFHR. A helical transmembrane segment spans residues 508–528; the sequence is VYTLTWLFLVEWVLLVISTVY. Over 529–532 the chain is Vacuolar; it reads ENKY. A helical transmembrane segment spans residues 533–553; the sequence is GLAGGYFVFFAFAGTFLATWI. The Cytoplasmic segment spans residues 554-663; sequence SYLELFALPR…WSIHLPKWVW (110 aa). Residues 579-612 form a disordered region; that stretch reads SSHGSRLGTASGEDVEDGEDEDEDDDGTTAEATE. A compositionally biased stretch (acidic residues) spans 591–606; sequence EDVEDGEDEDEDDDGT. The helical transmembrane segment at 664–684 threads the bilayer; that stretch reads VLQFLLTAPLVLTFVGPLALL. Over 685–700 the chain is Vacuolar; it reads LTSALRQTGQDGSSSL. A helical membrane pass occupies residues 701–721; that stretch reads FIYIAVAALTTLLFIPLLPFI. At 722–727 the chain is on the cytoplasmic side; it reads HRYTHH. The helical transmembrane segment at 728-748 threads the bilayer; the sequence is IPLFLLCVFAGTLIYNLVAFP. The Vacuolar segment spans residues 749 to 967; the sequence is FSPANRLKLF…LVEGSRRFEI (219 aa). N-linked (GlcNAc...) asparagine glycosylation is found at Asn795 and Asn832.

Belongs to the peptidase M28 family. Zn(2+) serves as cofactor.

It localises to the vacuole membrane. Functionally, may be involved in vacuolar sorting and osmoregulation. The polypeptide is Vacuolar membrane protease (Neosartorya fischeri (strain ATCC 1020 / DSM 3700 / CBS 544.65 / FGSC A1164 / JCM 1740 / NRRL 181 / WB 181) (Aspergillus fischerianus)).